The chain runs to 348 residues: Large ribosomal subunit protein uL3m (348 aa).

The N-terminal 40 residues, 1–40 (MPGWRLLAQAGARVLGCGARGLGADPGLERRKNILFFVRN), are a transit peptide targeting the mitochondrion.

Belongs to the universal ribosomal protein uL3 family. Component of the mitochondrial ribosome large subunit (39S) which comprises a 16S rRNA and about 50 distinct proteins.

It localises to the mitochondrion. The chain is Large ribosomal subunit protein uL3m (Mrpl3) from Mus musculus (Mouse).